We begin with the raw amino-acid sequence, 838 residues long: Tuftelin-interacting protein 11 (838 aa).

Residues 1 to 13 (MSLSHLYRDGEGH) show a composition bias toward basic and acidic residues. Residues 1–51 (MSLSHLYRDGEGHLDDDDDDERENFEITDWDLQNEFNPNRQRHWQTKEEAT) are required for interaction with DHX15. Disordered stretches follow at residues 1-74 (MSLS…RARD) and 86-137 (LKKG…SGGT). S2 is modified (phosphoserine). Residues 14–29 (LDDDDDDERENFEITD) are compositionally biased toward acidic residues. Residues 45–65 (QTKEEATYGVWAERDSDEERP) show a composition bias toward basic and acidic residues. S60, S96, and S99 each carry phosphoserine. Acidic residues predominate over residues 92-101 (EEADSEDSDA). A compositionally biased stretch (basic and acidic residues) spans 102 to 117 (EEKPVKQEDFPKDLGP). A Phosphoserine modification is found at S145. The G-patch domain occupies 150–196 (TKGIGQKLLQKMGYVPGRGLGKNAQGIINPIEAKQRKGKGAVGAYGS). The disordered stretch occupies residues 193 to 237 (AYGSERTTQSLQDFPVADSEEEAEEEFQKELSQWRKDPSGSKKKP). S211 is modified (phosphoserine). Residues 218 to 232 (EFQKELSQWRKDPSG) show a composition bias toward basic and acidic residues. The Nuclear localization signal motif lies at 701-706 (VKDKFN). Positions 711–735 (IMNRAVSSNVGAYMQPGARENIAYL) are required for nuclear speckle localization.

The protein belongs to the TFP11/STIP family. In terms of assembly, identified in the spliceosome C complex. Found in the Intron Large (IL) complex, a post-mRNA release spliceosomal complex containing the excised intron, U2, U5 and U6 snRNPs, and splicing factors. Interacts with TUFT1. Interacts with DHX15; indicative for a recruitment of DHX15 to the IL complex. Interacts with GCFC2. Widely expressed. In tooth it is expressed in ameloblasts and odontoblasts.

It is found in the cytoplasm. Its subcellular location is the nucleus. Its function is as follows. Involved in pre-mRNA splicing, specifically in spliceosome disassembly during late-stage splicing events. Intron turnover seems to proceed through reactions in two lariat-intron associated complexes termed Intron Large (IL) and Intron Small (IS). In cooperation with DHX15 seems to mediate the transition of the U2, U5 and U6 snRNP-containing IL complex to the snRNP-free IS complex leading to efficient debranching and turnover of excised introns. May play a role in the differentiation of ameloblasts and odontoblasts or in the forming of the enamel extracellular matrix. In Mus musculus (Mouse), this protein is Tuftelin-interacting protein 11 (Tfip11).